The primary structure comprises 733 residues: Photosystem I P700 chlorophyll a apoprotein A2 (733 aa).

8 consecutive transmembrane segments (helical) span residues 46–69, 135–158, 175–199, 273–291, 330–353, 369–395, 417–439, and 516–534; these read IFASHFGQLAIIFLWTSGNLFHVA, LYNGSLFLLFVAGLFLFAGWLHLQ, LNHHLSGLFGVSSLAWTGHLVHVAI, MAHHHLAIAVVFIIAGHQY, LHFQLGLALASVGVLCSLTAQHMY, AALYSHHQYIAGFIMCGAFAHGAIFFI, AIISHLSWVSLFLGFHTLGLYVH, and FLVHHAIALGLHTTTLILV. [4Fe-4S] cluster contacts are provided by C558 and C567. 2 helical membrane passes run 574–595 and 642–664; these read AFYLAVFWELNTVSWTVFYFHW and LSVWAWMFLFGHLIYATGFMFLI. Chlorophyll a is bound by residues H653, M661, and Y669. W670 provides a ligand contact to phylloquinone. A helical membrane pass occupies residues 706–726; the sequence is LVGLTHFAVGFVLTYAAFVIA.

It belongs to the PsaA/PsaB family. In terms of assembly, the PsaA/B heterodimer binds the P700 chlorophyll special pair and subsequent electron acceptors. PSI consists of a core antenna complex that captures photons, and an electron transfer chain that converts photonic excitation into a charge separation. The eukaryotic PSI reaction center is composed of at least 11 subunits. The cofactor is P700 is a chlorophyll a/chlorophyll a' dimer, A0 is one or more chlorophyll a, A1 is one or both phylloquinones and FX is a shared 4Fe-4S iron-sulfur center..

Its subcellular location is the plastid. The protein resides in the chloroplast thylakoid membrane. It carries out the reaction reduced [plastocyanin] + hnu + oxidized [2Fe-2S]-[ferredoxin] = oxidized [plastocyanin] + reduced [2Fe-2S]-[ferredoxin]. In terms of biological role, psaA and PsaB bind P700, the primary electron donor of photosystem I (PSI), as well as the electron acceptors A0, A1 and FX. PSI is a plastocyanin/cytochrome c6-ferredoxin oxidoreductase, converting photonic excitation into a charge separation, which transfers an electron from the donor P700 chlorophyll pair to the spectroscopically characterized acceptors A0, A1, FX, FA and FB in turn. Oxidized P700 is reduced on the lumenal side of the thylakoid membrane by plastocyanin or cytochrome c6. In Ostreococcus tauri, this protein is Photosystem I P700 chlorophyll a apoprotein A2.